The chain runs to 184 residues: MYTSNIQVASRYAKSLLKQAIDMGVLDHVYKDALFFKKVGKSHKTLFRVLHNPIIKNETKLAILTSIFQSRIHPLTFHLLKLLSHRKREGILPTIIDTFLEQYYIYRGIKAASVTTTFRLSDDLIRYFKNLAKSLVPCKEVILKEYVNPSIQGGFVLRIEDQQLDNSLATRLHKLKKQYSIAEY.

The protein belongs to the ATPase delta chain family. As to quaternary structure, F-type ATPases have 2 components, F(1) - the catalytic core - and F(0) - the membrane proton channel. F(1) has five subunits: alpha(3), beta(3), gamma(1), delta(1), epsilon(1). F(0) has three main subunits: a(1), b(2) and c(10-14). The alpha and beta chains form an alternating ring which encloses part of the gamma chain. F(1) is attached to F(0) by a central stalk formed by the gamma and epsilon chains, while a peripheral stalk is formed by the delta and b chains.

It localises to the cell membrane. Its function is as follows. F(1)F(0) ATP synthase produces ATP from ADP in the presence of a proton or sodium gradient. F-type ATPases consist of two structural domains, F(1) containing the extramembraneous catalytic core and F(0) containing the membrane proton channel, linked together by a central stalk and a peripheral stalk. During catalysis, ATP synthesis in the catalytic domain of F(1) is coupled via a rotary mechanism of the central stalk subunits to proton translocation. This protein is part of the stalk that links CF(0) to CF(1). It either transmits conformational changes from CF(0) to CF(1) or is implicated in proton conduction. In Amoebophilus asiaticus (strain 5a2), this protein is ATP synthase subunit delta.